A 457-amino-acid chain; its full sequence is Multidrug resistance protein MdtK (457 aa).

Helical transmembrane passes span 11-31 (LLAL…MGFV), 53-73 (IWLP…PVIA), 93-113 (WLAG…GYII), 127-147 (AVGY…FQVA), 160-180 (GMVM…IFIY), 189-209 (GGVG…FSMI), 243-263 (LPIA…ALLV), 276-296 (IALN…AAVT), 314-334 (AART…LFTV), 357-377 (LMLL…GSGI), 387-407 (IFFI…YILA), and 418-438 (PAGF…LMML).

The protein belongs to the multi antimicrobial extrusion (MATE) (TC 2.A.66.1) family. MdtK subfamily.

It is found in the cell inner membrane. Its function is as follows. Multidrug efflux pump that functions probably as a Na(+)/drug antiporter. In Enterobacter sp. (strain 638), this protein is Multidrug resistance protein MdtK.